The chain runs to 115 residues: Large ribosomal subunit protein bL19 (115 aa).

This sequence belongs to the bacterial ribosomal protein bL19 family.

Its function is as follows. This protein is located at the 30S-50S ribosomal subunit interface and may play a role in the structure and function of the aminoacyl-tRNA binding site. In Syntrophotalea carbinolica (strain DSM 2380 / NBRC 103641 / GraBd1) (Pelobacter carbinolicus), this protein is Large ribosomal subunit protein bL19.